Here is a 97-residue protein sequence, read N- to C-terminus: CRISPR-associated endoribonuclease Cas2 1 (97 aa).

Aspartate 12 contacts Mg(2+).

Belongs to the CRISPR-associated endoribonuclease Cas2 protein family. As to quaternary structure, homodimer, forms a heterotetramer with a Cas1 homodimer. It depends on Mg(2+) as a cofactor.

In terms of biological role, CRISPR (clustered regularly interspaced short palindromic repeat) is an adaptive immune system that provides protection against mobile genetic elements (viruses, transposable elements and conjugative plasmids). CRISPR clusters contain sequences complementary to antecedent mobile elements and target invading nucleic acids. CRISPR clusters are transcribed and processed into CRISPR RNA (crRNA). Functions as a ssRNA-specific endoribonuclease. Involved in the integration of spacer DNA into the CRISPR cassette. The chain is CRISPR-associated endoribonuclease Cas2 1 from Francisella tularensis subsp. novicida (strain U112).